Reading from the N-terminus, the 432-residue chain is MVNEQIIDISGPLKGEIEVPGDKSMTHRAIMLASLAEGVSTIYKPLLGEDCRRTMDIFRLLGVEIKEDDEKLVVTSPGYQSFNTPHQVLYTGNSGTTTRLLAGLLSGLGIESVLSGDVSIGKRPMDRVLRPLKLMDANIEGIEDNYTPLIIKPSVIKGINYQMEVASAQVKSAILFASLFSKEPTIIKELDVSRNHTETMFKHFNIPIEAEGLSINTTPEAIRYIKPADFHVPGDISSAAFFIVAALITPGSDVTIHNVGINPTRSGIIDIVEKMGGNIQLFNQTTGAEPTASIRIQYTPMLQPITIEGELVPKAIDELPVIALLCTQAVGTSTIKDAEELKVKETNRIDTTADMLNLLGFELQPTNDGLIIYPSEFKTNATVDSLTDHRIGMMLAVASLLSSEPVKIKQFDAVNVSFPGFLPKLKLLENEG.

Residues Lys-23, Ser-24, and Arg-28 each contribute to the 3-phosphoshikimate site. Position 23 (Lys-23) interacts with phosphoenolpyruvate. Phosphoenolpyruvate-binding residues include Gly-95 and Arg-123. 3-phosphoshikimate is bound by residues Ser-167, Gln-169, Asp-317, and Lys-344. Gln-169 contacts phosphoenolpyruvate. Asp-317 serves as the catalytic Proton acceptor. 2 residues coordinate phosphoenolpyruvate: Arg-348 and Arg-390.

The protein belongs to the EPSP synthase family. In terms of assembly, monomer.

It is found in the cytoplasm. The enzyme catalyses 3-phosphoshikimate + phosphoenolpyruvate = 5-O-(1-carboxyvinyl)-3-phosphoshikimate + phosphate. It participates in metabolic intermediate biosynthesis; chorismate biosynthesis; chorismate from D-erythrose 4-phosphate and phosphoenolpyruvate: step 6/7. Its function is as follows. Catalyzes the transfer of the enolpyruvyl moiety of phosphoenolpyruvate (PEP) to the 5-hydroxyl of shikimate-3-phosphate (S3P) to produce enolpyruvyl shikimate-3-phosphate and inorganic phosphate. The sequence is that of 3-phosphoshikimate 1-carboxyvinyltransferase from Staphylococcus aureus (strain COL).